Consider the following 801-residue polypeptide: Phenylalanine--tRNA ligase beta subunit (801 aa).

Residues 39–153 (AEGLSKLVVG…EGAIPGDSIF (115 aa)) enclose the tRNA-binding domain. The B5 domain occupies 406 to 481 (TEPVEVSTTL…RIYGYEKLPT (76 aa)). Positions 459, 465, 468, and 469 each coordinate Mg(2+). Positions 708 to 801 (TKYPSVSRDI…LVEKVNAEIR (94 aa)) constitute an FDX-ACB domain.

It belongs to the phenylalanyl-tRNA synthetase beta subunit family. Type 1 subfamily. Tetramer of two alpha and two beta subunits. Mg(2+) serves as cofactor.

The protein localises to the cytoplasm. It catalyses the reaction tRNA(Phe) + L-phenylalanine + ATP = L-phenylalanyl-tRNA(Phe) + AMP + diphosphate + H(+). This chain is Phenylalanine--tRNA ligase beta subunit, found in Streptococcus agalactiae serotype Ia (strain ATCC 27591 / A909 / CDC SS700).